Reading from the N-terminus, the 117-residue chain is Nascent polypeptide-associated complex protein (117 aa).

The 69-residue stretch at 9–77 folds into the NAC-A/B domain; that stretch reads PKQLKQMQRA…ARECDLEAEV (69 aa).

Belongs to the NAC-alpha family. Homodimer. Interacts with the ribosome. Binds ribosomal RNA.

Functionally, contacts the emerging nascent chain on the ribosome. This chain is Nascent polypeptide-associated complex protein, found in Methanothermobacter marburgensis (strain ATCC BAA-927 / DSM 2133 / JCM 14651 / NBRC 100331 / OCM 82 / Marburg) (Methanobacterium thermoautotrophicum).